A 247-amino-acid chain; its full sequence is ATP synthase subunit a, chloroplastic (247 aa).

5 helical membrane passes run 38–58 (QVLITSWVVIAILLGSAALAV), 95–115 (VPFIGTMFLFIFVSNWSGALL), 134–154 (INTTVALALLTSVAYFYAGLT), 199–219 (LVVVVLVSLVPSVVPIPVMFL), and 220–240 (GLFTSGIQALIFATLAAAYIG).

It belongs to the ATPase A chain family. F-type ATPases have 2 components, CF(1) - the catalytic core - and CF(0) - the membrane proton channel. CF(1) has five subunits: alpha(3), beta(3), gamma(1), delta(1), epsilon(1). CF(0) has four main subunits: a, b, b' and c.

The protein resides in the plastid. Its subcellular location is the chloroplast thylakoid membrane. Functionally, key component of the proton channel; it plays a direct role in the translocation of protons across the membrane. The protein is ATP synthase subunit a, chloroplastic of Helianthus annuus (Common sunflower).